Here is a 101-residue protein sequence, read N- to C-terminus: Small ribosomal subunit protein uS14 (101 aa).

It belongs to the universal ribosomal protein uS14 family. Part of the 30S ribosomal subunit. Contacts proteins S3 and S10.

Functionally, binds 16S rRNA, required for the assembly of 30S particles and may also be responsible for determining the conformation of the 16S rRNA at the A site. This chain is Small ribosomal subunit protein uS14, found in Citrobacter koseri (strain ATCC BAA-895 / CDC 4225-83 / SGSC4696).